Consider the following 558-residue polypeptide: Acylase ACY 1 proenzyme (558 aa).

The active-site Nucleophile is the T368.

The protein belongs to the gamma-glutamyltransferase family. Dimer of two non-identical chains processed from the same precursor.

The catalysed reaction is (7R)-7-(4-carboxybutanamido)cephalosporanate + H2O = (7R)-7-aminocephalosporanate + glutarate. It catalyses the reaction an N-terminal (5-L-glutamyl)-[peptide] + an alpha-amino acid = 5-L-glutamyl amino acid + an N-terminal L-alpha-aminoacyl-[peptide]. It carries out the reaction glutathione + H2O = L-cysteinylglycine + L-glutamate. The enzyme catalyses an S-substituted glutathione + H2O = an S-substituted L-cysteinylglycine + L-glutamate. In terms of biological role, besides the cephalosporin acylase I activity which converts GL-7ACA into 7-ACA; this enzyme displays some gamma glutamyltranspeptidase activity. This is Acylase ACY 1 proenzyme (acyI) from Pseudomonas sp. (strain SE83).